A 286-amino-acid polypeptide reads, in one-letter code: MAITAAASRLGTEPFSNAAKIELRSDASREEVEAVINAVYRHVLGNDYIMASERLVSAESLLRDGNLTVREFVRSVAKSELYKKKFFYNSFQTRFIELNYKHLLGRAPYDESEIVFHLDLYQNKGYDAEIDSYIDSVEYQNNFGDNIVPYYRGFETQPGQKTVGFNRMFRLYRGYANSDRAQIEGTKPRLARELATNKASSIVGPSGSNPAWGYRPSVDITPRKTLGNAVGENDRVYRIEVTGVRSPGYPSVRRSSYAIIVPYERLSEKIQQIHKLGGKIVSITSA.

Residues 2-180 (AITAAASRLG…LYRGYANSDR (179 aa)) form the PBS-linker domain. The CpcD-like domain maps to 234–286 (DRVYRIEVTGVRSPGYPSVRRSSYAIIVPYERLSEKIQQIHKLGGKIVSITSA).

This sequence belongs to the phycobilisome linker protein family.

It is found in the cellular thylakoid membrane. In terms of biological role, rod linker protein, associated with phycocyanin. Linker polypeptides determine the state of aggregation and the location of the disk-shaped phycobiliprotein units within the phycobilisome and modulate their spectroscopic properties in order to mediate a directed and optimal energy transfer. The protein is Phycobilisome 32.1 kDa linker polypeptide, phycocyanin-associated, rod (cpcC) of Mastigocladus laminosus (Fischerella sp.).